Reading from the N-terminus, the 273-residue chain is Translation initiation factor IF-3, mitochondrial (273 aa).

Residues 1-32 (MAALFLKKLTLQTVKTENYCIRRCLGKYILQG) constitute a mitochondrion transit peptide. Residues 33-92 (PAPTQQPPRPSCLIHAKAFSTEDTQDEMTKKKKNETAFSSVGRKINERIIHVLDEQGNDL) constitute a propeptide, removed in mature form. Residues 242 to 273 (EEAAWKAAPDTPRRDALNGGDGKDGASGVLPQ) form a disordered region. The span at 252 to 265 (TPRRDALNGGDGKD) shows a compositional bias: basic and acidic residues.

Belongs to the IF-3 family.

It is found in the mitochondrion. Functionally, IF-3 binds to the 28S ribosomal subunit and shifts the equilibrium between 55S ribosomes and their 39S and 28S subunits in favor of the free subunits, thus enhancing the availability of 28S subunits on which protein synthesis initiation begins. This is Translation initiation factor IF-3, mitochondrial (MTIF3) from Bos taurus (Bovine).